A 629-amino-acid chain; its full sequence is Phosphomethylpyrimidine synthase (629 aa).

Positions 1 to 30 (MTTKLKNASNLSESAQVDQQSVQPFTRSQK) are disordered. Substrate contacts are provided by residues asparagine 233, methionine 262, tyrosine 291, histidine 327, 347 to 349 (SRG), 388 to 391 (DGLR), and glutamate 427. Histidine 431 is a binding site for Zn(2+). Tyrosine 454 provides a ligand contact to substrate. Position 495 (histidine 495) interacts with Zn(2+). The [4Fe-4S] cluster site is built by cysteine 575, cysteine 578, and cysteine 583.

It belongs to the ThiC family. In terms of assembly, homodimer. It depends on [4Fe-4S] cluster as a cofactor.

The enzyme catalyses 5-amino-1-(5-phospho-beta-D-ribosyl)imidazole + S-adenosyl-L-methionine = 4-amino-2-methyl-5-(phosphooxymethyl)pyrimidine + CO + 5'-deoxyadenosine + formate + L-methionine + 3 H(+). Its pathway is cofactor biosynthesis; thiamine diphosphate biosynthesis. Its function is as follows. Catalyzes the synthesis of the hydroxymethylpyrimidine phosphate (HMP-P) moiety of thiamine from aminoimidazole ribotide (AIR) in a radical S-adenosyl-L-methionine (SAM)-dependent reaction. This Pseudomonas fluorescens (strain ATCC BAA-477 / NRRL B-23932 / Pf-5) protein is Phosphomethylpyrimidine synthase.